The chain runs to 190 residues: MKDIRSALVMFILFTIICGGIYPSVVTGIANAVFPKQAQGSFVTGKDHRVVGSSLIGQPFSDAKYFWPRPSATVDFGYNSMASGGSNSGPTNPEYLKTVAERVKTLHDAGAAGSIPTALVQASGSGLDPDISPEAARIQVARVAKVRGMTAEQVERILAAHTRERQLGFLGEPRVNVLELNLALDNRENR.

A helical transmembrane segment spans residues 9-29 (VMFILFTIICGGIYPSVVTGI).

The protein belongs to the KdpC family. The system is composed of three essential subunits: KdpA, KdpB and KdpC.

The protein localises to the cell inner membrane. Its function is as follows. Part of the high-affinity ATP-driven potassium transport (or Kdp) system, which catalyzes the hydrolysis of ATP coupled with the electrogenic transport of potassium into the cytoplasm. This subunit acts as a catalytic chaperone that increases the ATP-binding affinity of the ATP-hydrolyzing subunit KdpB by the formation of a transient KdpB/KdpC/ATP ternary complex. In Citrifermentans bemidjiense (strain ATCC BAA-1014 / DSM 16622 / JCM 12645 / Bem) (Geobacter bemidjiensis), this protein is Potassium-transporting ATPase KdpC subunit.